Here is a 246-residue protein sequence, read N- to C-terminus: Enolase-phosphatase E1 (246 aa).

Residues aspartate 11 and glutamate 13 each contribute to the Mg(2+) site. Substrate contacts are provided by residues 140-141 (SS) and lysine 174. Aspartate 199 provides a ligand contact to Mg(2+).

This sequence belongs to the HAD-like hydrolase superfamily. MasA/MtnC family. Monomer. The cofactor is Mg(2+).

Its subcellular location is the cytoplasm. The protein localises to the nucleus. It carries out the reaction 5-methylsulfanyl-2,3-dioxopentyl phosphate + H2O = 1,2-dihydroxy-5-(methylsulfanyl)pent-1-en-3-one + phosphate. It participates in amino-acid biosynthesis; L-methionine biosynthesis via salvage pathway; L-methionine from S-methyl-5-thio-alpha-D-ribose 1-phosphate: step 3/6. The protein operates within amino-acid biosynthesis; L-methionine biosynthesis via salvage pathway; L-methionine from S-methyl-5-thio-alpha-D-ribose 1-phosphate: step 4/6. Bifunctional enzyme that catalyzes the enolization of 2,3-diketo-5-methylthiopentyl-1-phosphate (DK-MTP-1-P) into the intermediate 2-hydroxy-3-keto-5-methylthiopentenyl-1-phosphate (HK-MTPenyl-1-P), which is then dephosphorylated to form the acireductone 1,2-dihydroxy-3-keto-5-methylthiopentene (DHK-MTPene). The chain is Enolase-phosphatase E1 from Acyrthosiphon pisum (Pea aphid).